The primary structure comprises 900 residues: Trehalose-phosphatase (900 aa).

Disordered regions lie at residues 76-109 (SRLF…EEDP) and 874-900 (VKHS…SYKN). The span at 82–108 (KNRDKSENGEKGENDLHAKEEREKEED) shows a compositional bias: basic and acidic residues.

In the C-terminal section; belongs to the trehalose phosphatase family. The protein in the N-terminal section; belongs to the glycosyltransferase 20 family. Mg(2+) is required as a cofactor.

It carries out the reaction alpha,alpha-trehalose 6-phosphate + H2O = alpha,alpha-trehalose + phosphate. Its pathway is carbohydrate biosynthesis. In terms of biological role, phosphatase catalytic subunit of the trehalose synthase complex that catalyzes the production of trehalose from glucose-6-phosphate and UDP-alpha-D-glucose in a two step process. This Zygosaccharomyces rouxii protein is Trehalose-phosphatase.